Reading from the N-terminus, the 257-residue chain is MSMVETAPSKIQVRDLNFYYGKFHALKNINLDIAKNQVTAFIGPSGSGKSTLLRTFNKMYSLYPEQRAEGEILLDGDNILTNTQDIALLRAKVGMVFQKPTPFPMSIYDNIAFGVRLFEKLFRADMDERVQWALTKAALWNETKDKLHQSGYSLSGGQQQRLCIARGIAIRPEVLLLDEPCSALDPISTGRIEELITELKQDYTVVIVTHNMQQAARCSDHTAFMYLGELIEFSNTDDLFTKPAKKQTEDYITGRYG.

An ABC transporter domain is found at 11–252 (IQVRDLNFYY…PAKKQTEDYI (242 aa)). 43–50 (GPSGSGKS) is a binding site for ATP.

It belongs to the ABC transporter superfamily. Phosphate importer (TC 3.A.1.7) family. In terms of assembly, the complex is composed of two ATP-binding proteins (PstB), two transmembrane proteins (PstC and PstA) and a solute-binding protein (PstS).

Its subcellular location is the cell inner membrane. It catalyses the reaction phosphate(out) + ATP + H2O = ADP + 2 phosphate(in) + H(+). Its function is as follows. Part of the ABC transporter complex PstSACB involved in phosphate import. Responsible for energy coupling to the transport system. This Salmonella choleraesuis (strain SC-B67) protein is Phosphate import ATP-binding protein PstB.